A 316-amino-acid chain; its full sequence is MFASISPYYGVSFFEFFIVFFSRLFSGKLFYDHLYIDDIQVIVFFAIAVSCSIIGTFLVLKKMAMYANVVSHTILFGLVCACLFTHQLTHLSMQNLTIAAISTTLLTGASIHFIRNVFKVAEEASTALVFSLLFSASLLLLVFLTRNAHVGTELVIGNADALAKTDIFPVFLVLLXNLGVSYCFFSSFICVSFDTVFAFSLGIRVKLIDYLMMFLLSASIVGAFKAVGVLMSLAFLLVPGLIAKLIASSVQEMMGYSMIFGVLSALIAPALSRSILSVHGIGLSTSGLAVCLLLVFYIGTLATVFVRRHILLQSKN.

A run of 10 helical transmembrane segments spans residues 1–21, 39–59, 64–84, 94–114, 124–144, 171–191, 196–216, 226–246, 252–272, and 286–306; these read MFAS…IVFF, IQVI…TFLV, AMYA…ACLF, QNLT…IHFI, ASTA…LVFL, FLVL…FICV, VFAF…MFLL, AVGV…AKLI, EMMG…PALS, and SGLA…TVFV.

It belongs to the ABC-3 integral membrane protein family.

Its subcellular location is the cell inner membrane. In terms of biological role, part of an ATP-driven transport system TC_0338/TC_0339/TC_0341/TC_0342 for a metal. The polypeptide is Probable metal transport system membrane protein TC_0342 (Chlamydia muridarum (strain MoPn / Nigg)).